The following is a 974-amino-acid chain: Mediator of RNA polymerase II transcription subunit 16 (974 aa).

The segment at 62-92 (ESSSTLSTHSTTTSVNGSTTAGVGSTPNFGG) is disordered. Positions 63-75 (SSSTLSTHSTTTS) are enriched in low complexity. The segment covering 76-92 (VNGSTTAGVGSTPNFGG) has biased composition (polar residues). The Nuclear localization signal signature appears at 889–893 (KLPIK).

Belongs to the Mediator complex subunit 16 family. Component of the Mediator complex, which is composed of at least 21 subunits that form three structurally distinct submodules. The Mediator head module contains MED6, MED8, MED11, SRB4/MED17, SRB5/MED18, ROX3/MED19, SRB2/MED20 and SRB6/MED22, the middle module contains MED1, MED4, NUT1/MED5, MED7, CSE2/MED9, NUT2/MED10, SRB7/MED21 and SOH1/MED31, and the tail module contains MED2, PGD1/MED3, RGR1/MED14, GAL11/MED15 and SIN4/MED16. The head and the middle modules interact directly with RNA polymerase II, whereas the elongated tail module interacts with gene-specific regulatory proteins. Interacts with HOG1. In terms of processing, phosphorylated by KIN28.

It is found in the nucleus. Component of the Mediator complex, a coactivator involved in the regulated transcription of nearly all RNA polymerase II-dependent genes. Mediator functions as a bridge to convey information from gene-specific regulatory proteins to the basal RNA polymerase II transcription machinery. The Mediator complex, having a compact conformation in its free form, is recruited to promoters by direct interactions with regulatory proteins and serves for the assembly of a functional preinitiation complex with RNA polymerase II and the general transcription factors. The Mediator complex unfolds to an extended conformation and partially surrounds RNA polymerase II, specifically interacting with the unphosphorylated form of the C-terminal domain (CTD) of RNA polymerase II. The Mediator complex dissociates from the RNA polymerase II holoenzyme and stays at the promoter when transcriptional elongation begins. In Saccharomyces cerevisiae (strain ATCC 204508 / S288c) (Baker's yeast), this protein is Mediator of RNA polymerase II transcription subunit 16 (SIN4).